Consider the following 199-residue polypeptide: Probable GTP-binding protein EngB (199 aa).

Residues 28–199 form the EngB-type G domain; the sequence is DLPEIALAGR…DSWDAILEQV (172 aa). Residues 36-43, 63-67, 81-84, 148-151, and 180-182 each bind GTP; these read GRSNVGKS, GKTQL, DVPG, TKAD, and FSS. Mg(2+)-binding residues include S43 and T65.

This sequence belongs to the TRAFAC class TrmE-Era-EngA-EngB-Septin-like GTPase superfamily. EngB GTPase family. It depends on Mg(2+) as a cofactor.

Functionally, necessary for normal cell division and for the maintenance of normal septation. In Streptococcus pyogenes serotype M6 (strain ATCC BAA-946 / MGAS10394), this protein is Probable GTP-binding protein EngB.